Reading from the N-terminus, the 272-residue chain is Imidazole glycerol phosphate synthase subunit HisF (272 aa).

Catalysis depends on residues Asp-11 and Asp-130.

It belongs to the HisA/HisF family. As to quaternary structure, heterodimer of HisH and HisF.

Its subcellular location is the cytoplasm. The catalysed reaction is 5-[(5-phospho-1-deoxy-D-ribulos-1-ylimino)methylamino]-1-(5-phospho-beta-D-ribosyl)imidazole-4-carboxamide + L-glutamine = D-erythro-1-(imidazol-4-yl)glycerol 3-phosphate + 5-amino-1-(5-phospho-beta-D-ribosyl)imidazole-4-carboxamide + L-glutamate + H(+). Its pathway is amino-acid biosynthesis; L-histidine biosynthesis; L-histidine from 5-phospho-alpha-D-ribose 1-diphosphate: step 5/9. Functionally, IGPS catalyzes the conversion of PRFAR and glutamine to IGP, AICAR and glutamate. The HisF subunit catalyzes the cyclization activity that produces IGP and AICAR from PRFAR using the ammonia provided by the HisH subunit. This is Imidazole glycerol phosphate synthase subunit HisF from Methanococcus vannielii (strain ATCC 35089 / DSM 1224 / JCM 13029 / OCM 148 / SB).